A 188-amino-acid polypeptide reads, in one-letter code: MKITALEGQKISELSMIEVAHALLEQNGKEMQFSEIIRAIQDYLEKSDDEIKASISRFYTEINTDGSFIPLGNNVWALRSWYAIDEIDEEVIALDEIEDEEEEEKPAKKRKKVNAFGIEDEIDPEDEEGTKETTEEDMSYDTQAEDEDKDDVAAYDAELAEVELDNVDEEVDIEVEDDEDDSDDTDED.

Positions 14-81 (LSMIEVAHAL…GNNVWALRSW (68 aa)) constitute an HTH HARE-type domain. Positions 96 to 188 (EIEDEEEEEK…EDDSDDTDED (93 aa)) are disordered. 2 stretches are compositionally biased toward acidic residues: residues 118-150 (IEDEIDPEDEEGTKETTEEDMSYDTQAEDEDKD) and 158-188 (ELAEVELDNVDEEVDIEVEDDEDDSDDTDED).

Belongs to the RpoE family. RNAP is composed of a core of 2 alpha, a beta and a beta' subunits. The core is associated with a delta subunit and one of several sigma factors.

Functionally, participates in both the initiation and recycling phases of transcription. In the presence of the delta subunit, RNAP displays an increased specificity of transcription, a decreased affinity for nucleic acids, and an increased efficiency of RNA synthesis because of enhanced recycling. The polypeptide is Probable DNA-directed RNA polymerase subunit delta (Lactococcus lactis subsp. cremoris (strain MG1363)).